Here is a 288-residue protein sequence, read N- to C-terminus: ATP synthase gamma chain (288 aa).

This sequence belongs to the ATPase gamma chain family. F-type ATPases have 2 components, CF(1) - the catalytic core - and CF(0) - the membrane proton channel. CF(1) has five subunits: alpha(3), beta(3), gamma(1), delta(1), epsilon(1). CF(0) has three main subunits: a, b and c.

Its subcellular location is the cell inner membrane. Functionally, produces ATP from ADP in the presence of a proton gradient across the membrane. The gamma chain is believed to be important in regulating ATPase activity and the flow of protons through the CF(0) complex. The sequence is that of ATP synthase gamma chain from Rickettsia akari (strain Hartford).